An 86-amino-acid polypeptide reads, in one-letter code: Small ribosomal subunit protein bS16 (86 aa).

It belongs to the bacterial ribosomal protein bS16 family.

The chain is Small ribosomal subunit protein bS16 from Trichormus variabilis (strain ATCC 29413 / PCC 7937) (Anabaena variabilis).